We begin with the raw amino-acid sequence, 20 residues long: Catechol 1,2-dioxygenase (20 aa).

This sequence belongs to the intradiol ring-cleavage dioxygenase family. In terms of assembly, homodimer which dissociates into active monomeric subunits at high ionic strengths. Requires Fe(3+) as cofactor.

It catalyses the reaction catechol + O2 = cis,cis-muconate + 2 H(+). It functions in the pathway aromatic compound metabolism; beta-ketoadipate pathway; 5-oxo-4,5-dihydro-2-furylacetate from catechol: step 1/3. This chain is Catechol 1,2-dioxygenase, found in Acinetobacter radioresistens.